We begin with the raw amino-acid sequence, 66 residues long: RICDDSSIPFLRTPQLCPKGQDVCYKKTPIVKKFKWLQKKGCASSCPKNGFIKIFKIECCTKDNCI.

Intrachain disulfides connect cysteine 3-cysteine 24, cysteine 17-cysteine 42, cysteine 46-cysteine 59, and cysteine 60-cysteine 65.

Expressed by the venom gland.

The protein resides in the secreted. Functionally, not toxic to mice when injected intravenously or intraperitoneally. This Micrurus clarki (Clark's coral snake) protein is Clarkitoxin-1.